The sequence spans 273 residues: Ethanolamine ammonia-lyase small subunit (273 aa).

Adenosylcob(III)alamin contacts are provided by Val-164, Glu-185, and Cys-214.

It belongs to the EutC family. As to quaternary structure, the basic unit is a heterodimer which dimerizes to form tetramers. The heterotetramers trimerize; 6 large subunits form a core ring with 6 small subunits projecting outwards. It depends on adenosylcob(III)alamin as a cofactor.

It is found in the bacterial microcompartment. It catalyses the reaction ethanolamine = acetaldehyde + NH4(+). The protein operates within amine and polyamine degradation; ethanolamine degradation. Its function is as follows. Catalyzes the deamination of various vicinal amino-alcohols to oxo compounds. Allows this organism to utilize ethanolamine as the sole source of nitrogen and carbon in the presence of external vitamin B12. The protein is Ethanolamine ammonia-lyase small subunit of Pseudomonas paraeruginosa (strain DSM 24068 / PA7) (Pseudomonas aeruginosa (strain PA7)).